Here is a 569-residue protein sequence, read N- to C-terminus: Vacuolar protein sorting-associated protein 53 B (569 aa).

3 coiled-coil regions span residues 53-90 (TRAKENLNDAICAAEELSHKIQEIKSKAEQTEAMVQDI), 125-145 (QVMTSKRQYKEAATQLEAINE), and 295-316 (KEKSDVEKLLLELKRTLEFERE).

The protein belongs to the VPS53 family. In terms of assembly, component of the Golgi-associated retrograde protein (GARP) complex.

It localises to the cytoplasm. The protein resides in the golgi apparatus. The protein localises to the trans-Golgi network membrane. It is found in the endosome membrane. Involved in retrograde transport from early and late endosomes to late Golgi, leading to the membrane fusion between late Golgi and endosomal vesicles. In Arabidopsis thaliana (Mouse-ear cress), this protein is Vacuolar protein sorting-associated protein 53 B.